We begin with the raw amino-acid sequence, 325 residues long: Coiled-coil domain-containing protein 130 homolog (325 aa).

A coiled-coil region spans residues 156–262; it reads LKLENKKLDI…KLKRELIKNE (107 aa).

Belongs to the CWC16 family.

The sequence is that of Coiled-coil domain-containing protein 130 homolog from Dictyostelium discoideum (Social amoeba).